A 359-amino-acid chain; its full sequence is 3-dehydroquinate synthase (359 aa).

NAD(+) contacts are provided by residues 106 to 110 (GVVGD), 130 to 131 (TT), Lys-143, Lys-152, and 170 to 173 (TLQT). Zn(2+)-binding residues include Glu-185, His-248, and His-265.

The protein belongs to the sugar phosphate cyclases superfamily. Dehydroquinate synthase family. The cofactor is Co(2+). Zn(2+) serves as cofactor. Requires NAD(+) as cofactor.

The protein localises to the cytoplasm. The enzyme catalyses 7-phospho-2-dehydro-3-deoxy-D-arabino-heptonate = 3-dehydroquinate + phosphate. It participates in metabolic intermediate biosynthesis; chorismate biosynthesis; chorismate from D-erythrose 4-phosphate and phosphoenolpyruvate: step 2/7. Functionally, catalyzes the conversion of 3-deoxy-D-arabino-heptulosonate 7-phosphate (DAHP) to dehydroquinate (DHQ). This chain is 3-dehydroquinate synthase, found in Desulforamulus reducens (strain ATCC BAA-1160 / DSM 100696 / MI-1) (Desulfotomaculum reducens).